We begin with the raw amino-acid sequence, 57 residues long: uncharacterized protein (57 aa).

Its function is as follows. Proetin of unknown function whose overexpression causes growth inhibition. Overexpression increases the expression of ergosterol synthesis genes. This is an uncharacterized protein from Saccharomyces cerevisiae (strain ATCC 204508 / S288c) (Baker's yeast).